The sequence spans 272 residues: MRLSSHGKKTVSTSNNPVFNRIGLFFTAAILFALFLQMLFFLRPWQDIKETKVYTFQMDYRQVLKKVDLKVGDPYWRWAGQGQTINRRIKNDSMIRSLSLRLSKNGTAIIRVNENLTAGFVQIKQKWYRMDQNAHLSSKSIQPDGKTPVYTDFKNGSKILKKTITAYLSMDKVMRLAVAQIIYSPVKSSPNRLALVMNDGNLVYANPSSLAKRMDLYPKMVATMEEKGIKNGVIDLQYGGYARKFENSDDNLLSSLSSDKSKSSSKSSNSSK.

Residues methionine 1 to arginine 21 are Cytoplasmic-facing. The chain crosses the membrane as a helical span at residues isoleucine 22 to leucine 42. Residues arginine 43 to asparagine 115 form the POTRA domain. Residues arginine 43–lysine 272 lie on the Extracellular side of the membrane. Residues leucine 253–lysine 272 form a disordered region.

It belongs to the FtsQ/DivIB family. DivIB subfamily.

It is found in the cell membrane. In terms of biological role, cell division protein that may be involved in stabilizing or promoting the assembly of the division complex. The polypeptide is Cell division protein DivIB (Oenococcus oeni (strain ATCC BAA-331 / PSU-1)).